The primary structure comprises 362 residues: Heat-inducible transcription repressor HrcA (362 aa).

Belongs to the HrcA family.

In terms of biological role, negative regulator of class I heat shock genes (grpE-dnaK-dnaJ and groELS operons). Prevents heat-shock induction of these operons. The sequence is that of Heat-inducible transcription repressor HrcA from Rhodopseudomonas palustris (strain ATCC BAA-98 / CGA009).